Reading from the N-terminus, the 98-residue chain is snRNA-activating protein complex subunit 5 (98 aa).

Residues 73 to 82 (QTTLELSTKS) show a composition bias toward polar residues. The disordered stretch occupies residues 73–98 (QTTLELSTKSHVTEEEEEEEEEESDS). Thr-85 carries the post-translational modification Phosphothreonine. Positions 86 to 98 (EEEEEEEEEESDS) are enriched in acidic residues.

As to quaternary structure, part of the SNAPc complex composed of 5 subunits: SNAPC1, SNAPC2, SNAPC3, SNAPC4 and SNAPC5. SNAPC5 interacts with SNAPC4.

The protein localises to the nucleus. Part of the SNAPc complex required for the transcription of both RNA polymerase II and III small-nuclear RNA genes. Binds to the proximal sequence element (PSE), a non-TATA-box basal promoter element common to these 2 types of genes. Recruits TBP and BRF2 to the U6 snRNA TATA box. The chain is snRNA-activating protein complex subunit 5 (SNAPC5) from Homo sapiens (Human).